Here is a 206-residue protein sequence, read N- to C-terminus: RNA pyrophosphohydrolase (206 aa).

In terms of domain architecture, Nudix hydrolase spans 6–150; it reads GYRPNVGIVI…KRDVYRKVMK (145 aa). The Nudix box signature appears at 38–59; the sequence is GGINEGENIETAMYRELYEEVG. Basic and acidic residues predominate over residues 162–191; that stretch reads KPETVEKPRVERTEKRDFQKRDNQKREFRK. The disordered stretch occupies residues 162–206; that stretch reads KPETVEKPRVERTEKRDFQKRDNQKREFRKSARMWNNSHQKGKAQ.

The protein belongs to the Nudix hydrolase family. RppH subfamily. A divalent metal cation serves as cofactor.

Functionally, accelerates the degradation of transcripts by removing pyrophosphate from the 5'-end of triphosphorylated RNA, leading to a more labile monophosphorylated state that can stimulate subsequent ribonuclease cleavage. The polypeptide is RNA pyrophosphohydrolase (Actinobacillus pleuropneumoniae serotype 7 (strain AP76)).